A 493-amino-acid polypeptide reads, in one-letter code: Glycerol kinase (493 aa).

Thr13 provides a ligand contact to ADP. Positions 13, 14, and 15 each coordinate ATP. Sn-glycerol 3-phosphate is bound at residue Thr13. Arg17 serves as a coordination point for ADP. The sn-glycerol 3-phosphate site is built by Arg83, Glu84, Tyr135, and Asp244. Arg83, Glu84, Tyr135, Asp244, and Gln245 together coordinate glycerol. ADP is bound by residues Thr266 and Gly309. 4 residues coordinate ATP: Thr266, Gly309, Gln313, and Gly410. 2 residues coordinate ADP: Gly410 and Asn414.

This sequence belongs to the FGGY kinase family.

It catalyses the reaction glycerol + ATP = sn-glycerol 3-phosphate + ADP + H(+). It functions in the pathway polyol metabolism; glycerol degradation via glycerol kinase pathway; sn-glycerol 3-phosphate from glycerol: step 1/1. Its activity is regulated as follows. Inhibited by fructose 1,6-bisphosphate (FBP). Its function is as follows. Key enzyme in the regulation of glycerol uptake and metabolism. Catalyzes the phosphorylation of glycerol to yield sn-glycerol 3-phosphate. This is Glycerol kinase from Shewanella pealeana (strain ATCC 700345 / ANG-SQ1).